The following is a 445-amino-acid chain: NAD(P)H coenzyme A polysulfide/persulfide reductase (445 aa).

FAD is bound at residue 16–17 (AA). Position 27 (R27) interacts with CoA. FAD contacts are provided by residues 38 to 39 (EA) and 45 to 47 (HAP). Residues 44 to 48 (SHAPC), 65 to 66 (YY), and R75 contribute to the CoA site. The active-site Redox-active is C48. FAD-binding residues include V85, D283, and A301. CoA contacts are provided by N305 and K361. Y425 is an FAD binding site. CoA contacts are provided by W433 and R441.

It belongs to the class-III pyridine nucleotide-disulfide oxidoreductase family. Homodimer. Homotetramer. FAD is required as a cofactor.

The enzyme catalyses NADP(+) + 2 CoA = CoA-disulfide + NADPH + H(+). The catalysed reaction is NAD(+) + 2 CoA = CoA-disulfide + NADH + H(+). In terms of biological role, catalyzes the NAD(P)H-dependent reduction of polysulfide, CoA-polysulfides, and CoA persulfide, as well as the reduction of a range of other small persulfides, including TNB and glutathione persulfides. The likely in vivo substrates are di-, poly-, and persulfide derivatives of coenzyme A, although polysulfide itself is also efficiently reduced. Shows coenzyme A disulfide reductase (CoADR) activity with both NADH and NADPH, with a preference for NADPH. May also play a role in the reduction of elemental sulfur. This Pyrococcus horikoshii (strain ATCC 700860 / DSM 12428 / JCM 9974 / NBRC 100139 / OT-3) protein is NAD(P)H coenzyme A polysulfide/persulfide reductase.